We begin with the raw amino-acid sequence, 350 residues long: Methylthioribose-1-phosphate isomerase (350 aa).

The Proton donor role is filled by D241.

It belongs to the eIF-2B alpha/beta/delta subunits family. MtnA subfamily.

The protein localises to the cytoplasm. It localises to the nucleus. It carries out the reaction 5-(methylsulfanyl)-alpha-D-ribose 1-phosphate = 5-(methylsulfanyl)-D-ribulose 1-phosphate. It participates in amino-acid biosynthesis; L-methionine biosynthesis via salvage pathway; L-methionine from S-methyl-5-thio-alpha-D-ribose 1-phosphate: step 1/6. Functionally, catalyzes the interconversion of methylthioribose-1-phosphate (MTR-1-P) into methylthioribulose-1-phosphate (MTRu-1-P). The sequence is that of Methylthioribose-1-phosphate isomerase from Nematostella vectensis (Starlet sea anemone).